Consider the following 144-residue polypeptide: Nucleoside diphosphate kinase (144 aa).

Residues lysine 11, phenylalanine 59, arginine 87, threonine 93, arginine 104, and asparagine 114 each contribute to the ATP site. The active-site Pros-phosphohistidine intermediate is the histidine 117.

The protein belongs to the NDK family. As to quaternary structure, homotetramer. Mg(2+) serves as cofactor.

The protein resides in the cytoplasm. It catalyses the reaction a 2'-deoxyribonucleoside 5'-diphosphate + ATP = a 2'-deoxyribonucleoside 5'-triphosphate + ADP. The catalysed reaction is a ribonucleoside 5'-diphosphate + ATP = a ribonucleoside 5'-triphosphate + ADP. In terms of biological role, major role in the synthesis of nucleoside triphosphates other than ATP. The ATP gamma phosphate is transferred to the NDP beta phosphate via a ping-pong mechanism, using a phosphorylated active-site intermediate. This Aliivibrio fischeri (strain ATCC 700601 / ES114) (Vibrio fischeri) protein is Nucleoside diphosphate kinase.